Consider the following 356-residue polypeptide: Peptide chain release factor 1 (356 aa).

An N5-methylglutamine modification is found at Q233.

It belongs to the prokaryotic/mitochondrial release factor family. Methylated by PrmC. Methylation increases the termination efficiency of RF1.

It localises to the cytoplasm. Functionally, peptide chain release factor 1 directs the termination of translation in response to the peptide chain termination codons UAG and UAA. This Endomicrobium trichonymphae protein is Peptide chain release factor 1.